A 155-amino-acid polypeptide reads, in one-letter code: Small ribosomal subunit protein uS7cz/uS7cy (155 aa).

Belongs to the universal ribosomal protein uS7 family. In terms of assembly, part of the 30S ribosomal subunit.

The protein localises to the plastid. Its subcellular location is the chloroplast. Functionally, one of the primary rRNA binding proteins, it binds directly to 16S rRNA where it nucleates assembly of the head domain of the 30S subunit. This is Small ribosomal subunit protein uS7cz/uS7cy (rps7-A) from Ipomoea purpurea (Common morning glory).